The primary structure comprises 171 residues: UPF0312 protein SAB2563 (171 aa).

Belongs to the UPF0312 family.

The protein is UPF0312 protein SAB2563 of Staphylococcus aureus (strain bovine RF122 / ET3-1).